A 380-amino-acid chain; its full sequence is O-antigen polymerase (380 aa).

Helical transmembrane passes span 1 to 21 (MTYFTGFILILFAIIIKRLTP), 27 to 47 (NIVLIANAFWGILLVGYTFNE), 55 to 75 (ATTLFFILAFLFFFSMTYILI), 94 to 114 (YIYWFAGMINIISICFGIILL), 132 to 152 (SISGFGLGISLPLSFCCMYLA), 169 to 189 (FLLAVLSTSKIFLILFLVYIV), 201 to 221 (LIYGVFVFGLFALSSIILGKF), 229 to 249 (IISAIFDTLRVYLFSGLAAFN), 282 to 302 (ILPWINIGVWDTNVYTAFAPW), 306 to 326 (LGLYAAIIIGILLGFYYGIWF), 332 to 352 (LAVGFYQTFLCFPLLMLFFQE), and 353 to 373 (HYLLSWKMHFIYFLCAILLAM).

The protein localises to the cell inner membrane. It carries out the reaction n lipid-linked O-antigen repeat units = a lipid-linked O antigen + (n-1) polyisoprenyl diphosphate.. It functions in the pathway bacterial outer membrane biogenesis; LPS O-antigen biosynthesis. Its function is as follows. Polymerase involved in the biosynthesis of the lipopolysaccharide (LPS). Catalyzes the polymerization of the O-antigen repeat units on the periplasmic face of the inner membrane, leading to the formation of the lipid-linked O-antigen molecule. This chain is O-antigen polymerase, found in Shigella dysenteriae.